Reading from the N-terminus, the 292-residue chain is Shikimate dehydrogenase (NADP(+)) (292 aa).

Shikimate-binding positions include 25-27 and T72; that span reads SKS. Residue K76 is the Proton acceptor of the active site. N97 and D113 together coordinate shikimate. Residues 137–141, 161–166, and M230 contribute to the NADP(+) site; these read GAGGA and NRTQSK. Y232 contacts shikimate. G254 lines the NADP(+) pocket.

The protein belongs to the shikimate dehydrogenase family. Homodimer.

It carries out the reaction shikimate + NADP(+) = 3-dehydroshikimate + NADPH + H(+). It participates in metabolic intermediate biosynthesis; chorismate biosynthesis; chorismate from D-erythrose 4-phosphate and phosphoenolpyruvate: step 4/7. Functionally, involved in the biosynthesis of the chorismate, which leads to the biosynthesis of aromatic amino acids. Catalyzes the reversible NADPH linked reduction of 3-dehydroshikimate (DHSA) to yield shikimate (SA). The chain is Shikimate dehydrogenase (NADP(+)) from Shewanella sp. (strain ANA-3).